The sequence spans 317 residues: DNA-directed RNA polymerase subunit alpha (317 aa).

Residues 1 to 234 (MKQFVRPEFI…AHLEFFIDLN (234 aa)) form an alpha N-terminal domain (alpha-NTD) region. The interval 249 to 317 (DDKELDRTVE…ASLGLAFRQS (69 aa)) is alpha C-terminal domain (alpha-CTD).

Belongs to the RNA polymerase alpha chain family. As to quaternary structure, homodimer. The RNAP catalytic core consists of 2 alpha, 1 beta, 1 beta' and 1 omega subunit. When a sigma factor is associated with the core the holoenzyme is formed, which can initiate transcription.

The enzyme catalyses RNA(n) + a ribonucleoside 5'-triphosphate = RNA(n+1) + diphosphate. In terms of biological role, DNA-dependent RNA polymerase catalyzes the transcription of DNA into RNA using the four ribonucleoside triphosphates as substrates. The protein is DNA-directed RNA polymerase subunit alpha of Mycoplasma capricolum subsp. capricolum (strain California kid / ATCC 27343 / NCTC 10154).